The primary structure comprises 487 residues: Variant surface glycoprotein WRATAT B (487 aa).

A signal peptide spans 1–19 (MWIILALLTLAGSRVAHGA). N-linked (GlcNAc...) asparagine glycans are attached at residues Asn71, Asn84, Asn418, and Asn465. Residues 443–468 (KPKAGTEAATTGPGERDAGATANTTG) are disordered. Residue Ser470 is the site of GPI-anchor amidated serine attachment. A propeptide spans 471–487 (NSFVIKTSPLLFAFLLF) (removed in mature form).

Its subcellular location is the cell membrane. In terms of biological role, VSG forms a coat on the surface of the parasite. The trypanosome evades the immune response of the host by expressing a series of antigenically distinct VSGs from an estimated 1000 VSG genes. This chain is Variant surface glycoprotein WRATAT B, found in Trypanosoma brucei rhodesiense.